The sequence spans 569 residues: Proline--tRNA ligase (569 aa).

This sequence belongs to the class-II aminoacyl-tRNA synthetase family. ProS type 1 subfamily. In terms of assembly, homodimer.

Its subcellular location is the cytoplasm. It catalyses the reaction tRNA(Pro) + L-proline + ATP = L-prolyl-tRNA(Pro) + AMP + diphosphate. Functionally, catalyzes the attachment of proline to tRNA(Pro) in a two-step reaction: proline is first activated by ATP to form Pro-AMP and then transferred to the acceptor end of tRNA(Pro). As ProRS can inadvertently accommodate and process non-cognate amino acids such as alanine and cysteine, to avoid such errors it has two additional distinct editing activities against alanine. One activity is designated as 'pretransfer' editing and involves the tRNA(Pro)-independent hydrolysis of activated Ala-AMP. The other activity is designated 'posttransfer' editing and involves deacylation of mischarged Ala-tRNA(Pro). The misacylated Cys-tRNA(Pro) is not edited by ProRS. This is Proline--tRNA ligase from Desulforamulus reducens (strain ATCC BAA-1160 / DSM 100696 / MI-1) (Desulfotomaculum reducens).